An 853-amino-acid chain; its full sequence is Aminotransferase PigE (853 aa).

Pyridoxal 5'-phosphate is bound at residue 503–504 (GT). Residue lysine 645 is modified to N6-(pyridoxal phosphate)lysine. Threonine 680 serves as a coordination point for pyridoxal 5'-phosphate.

The protein belongs to the class-III pyridoxal-phosphate-dependent aminotransferase family. Homodimer. Pyridoxal 5'-phosphate serves as cofactor.

It functions in the pathway antibiotic biosynthesis; prodigiosin biosynthesis. Its function is as follows. Involved in the biosynthesis of 2-methyl-3-n-amyl-pyrrole (MAP), one of the terminal products involved in the biosynthesis of the red antibiotic prodigiosin (Pig). Catalyzes the transamination to the aldehyde group of 3-acetyloctanal, resulting in an aminoketone, which spontaneously cyclizes to yield the dihydro form of MAP (H2MAP). The sequence is that of Aminotransferase PigE from Serratia sp. (strain FS14).